The chain runs to 191 residues: Glutathione S-transferase Y-2 (191 aa).

One can recognise a GST N-terminal domain in the interval T2–E80. Residues T85 to M191 enclose the GST C-terminal domain.

It belongs to the GST superfamily.

The enzyme catalyses RX + glutathione = an S-substituted glutathione + a halide anion + H(+). In terms of biological role, conjugation of reduced glutathione to a wide number of exogenous and endogenous hydrophobic electrophiles. The sequence is that of Glutathione S-transferase Y-2 (GSTY2) from Pichia kudriavzevii (Yeast).